Here is a 356-residue protein sequence, read N- to C-terminus: HORMA domain-containing protein 1 (356 aa).

An HORMA domain is found at Gln-24–Val-225. Disordered regions lie at residues Glu-282–Asp-305 and Gln-333–Lys-356. Over residues Glu-288 to Phe-298 the composition is skewed to basic and acidic residues. Positions Pro-347–Lys-356 are enriched in basic residues.

The protein localises to the nucleus. The protein resides in the chromosome. In terms of biological role, plays a key role in meiotic progression by ensuring that sufficient numbers of processed DNA double-strand breaks (DSBs) are available for successful homology search, promoting synaptonemal-complex formation independently and playing key role in the male mid-pachytene checkpoint and the female meiotic prophase checkpoint. This Danio rerio (Zebrafish) protein is HORMA domain-containing protein 1 (hormad1).